We begin with the raw amino-acid sequence, 21 residues long: Protein IroK (21 aa).

Possible increased expression of this protein (due to mutations upstream of the start codon) is proposed to be responsible for resistance to 3-hydroxypropionic acid (3-HP). This chain is Protein IroK (iroK), found in Escherichia coli (strain K12).